The following is a 92-amino-acid chain: Small nuclear ribonucleoprotein E (92 aa).

The region spanning Ile-18 to Asn-92 is the Sm domain.

The protein belongs to the snRNP Sm proteins family. In terms of assembly, core component of the spliceosomal U1, U2, U4 and U5 small nuclear ribonucleoproteins (snRNPs), the building blocks of the spliceosome. Most spliceosomal snRNPs contain a common set of Sm proteins, snrpb, snrpd1, snrpd2, snrpd3, snrpe, snrpf and snrpg that assemble in a heptameric protein ring on the Sm site of the small nuclear RNA to form the core snRNP. Component of the U1 snRNP. The U1 snRNP is composed of the U1 snRNA and the 7 core Sm proteins snrpb, snrpd1, snrpd2, snrpd3, snrpe, snrpf and snrpg, and at least three U1 snRNP-specific proteins snrnp70/u1-70k, snrpa/u1-a and snrpc/u1-c. Component of the U4/U6-U5 tri-snRNP complex composed of the U4, U6 and U5 snRNAs and at least prpf3, prpf4, prpf6, prpf8, prpf31, snrnp200, txnl4a, snrnp40, snrpb, snrpd1, snrpd2, snrpd3, snrpe, snrpf, snrpg, ddx23, cd2bp2, ppih, snu13, eftud2, sart1 and usp39, plus lsm2, lsm3, lsm4, lsm5, lsm6, lsm7 and lsm8. Component of the U7 snRNP complex, or U7 Sm protein core complex, that is composed of the U7 snRNA and at least lsm10, lsm11, snrpb, snrpd3, snrpe, snrpf and snrpg; the complex does not contain snrpd1 and snrpd2. Component of the minor spliceosome, which splices U12-type introns. Part of the SMN-Sm complex that contains smn1, gemin2/sip1, ddx20/gemin3, gemin4, gemin5, gemin6, gemin7, gemin8, strap/unrip and the Sm proteins snrpb, snrpd1, snrpd2, snrpd3, snrpe, snrpf and snrpg; catalyzes core snRNPs assembly. Forms a 6S pICln-Sm complex composed of clns1a/pICln, snrpd1, snrpd2, snrpe, snrpf and snrpg; ring-like structure where clns1a/pICln mimics additional Sm proteins and which is unable to assemble into the core snRNP.

It is found in the cytoplasm. It localises to the cytosol. Its subcellular location is the nucleus. Functionally, plays a role in pre-mRNA splicing as a core component of the spliceosomal U1, U2, U4 and U5 small nuclear ribonucleoproteins (snRNPs), the building blocks of the spliceosome. Component of both the pre-catalytic spliceosome B complex and activated spliceosome C complexes. As a component of the minor spliceosome, involved in the splicing of U12-type introns in pre-mRNAs. As part of the U7 snRNP it is involved in histone 3'-end processing. This is Small nuclear ribonucleoprotein E (snrpe) from Danio rerio (Zebrafish).